The chain runs to 449 residues: Bifunctional protein GlmU (449 aa).

Positions 1-225 (MLSVAILAAG…NGELQGINNR (225 aa)) are pyrophosphorylase. UDP-N-acetyl-alpha-D-glucosamine contacts are provided by residues 7-10 (LAAG), lysine 21, glutamine 73, and 78-79 (GT). Aspartate 103 contributes to the Mg(2+) binding site. UDP-N-acetyl-alpha-D-glucosamine is bound by residues glycine 140, glutamate 154, asparagine 169, and asparagine 223. Asparagine 223 contacts Mg(2+). Residues 226 to 246 (IHLSECEECIQNSIKEKHMLN) form a linker region. The segment at 247 to 449 (GVTFINKASC…NIENWKKKKS (203 aa)) is N-acetyltransferase. UDP-N-acetyl-alpha-D-glucosamine-binding residues include arginine 328 and lysine 346. The Proton acceptor role is filled by histidine 358. Residues tyrosine 361 and asparagine 372 each coordinate UDP-N-acetyl-alpha-D-glucosamine. Positions 375, 418, and 435 each coordinate acetyl-CoA.

The protein in the N-terminal section; belongs to the N-acetylglucosamine-1-phosphate uridyltransferase family. This sequence in the C-terminal section; belongs to the transferase hexapeptide repeat family. Homotrimer. Mg(2+) is required as a cofactor.

It localises to the cytoplasm. It carries out the reaction alpha-D-glucosamine 1-phosphate + acetyl-CoA = N-acetyl-alpha-D-glucosamine 1-phosphate + CoA + H(+). It catalyses the reaction N-acetyl-alpha-D-glucosamine 1-phosphate + UTP + H(+) = UDP-N-acetyl-alpha-D-glucosamine + diphosphate. Its pathway is nucleotide-sugar biosynthesis; UDP-N-acetyl-alpha-D-glucosamine biosynthesis; N-acetyl-alpha-D-glucosamine 1-phosphate from alpha-D-glucosamine 6-phosphate (route II): step 2/2. It functions in the pathway nucleotide-sugar biosynthesis; UDP-N-acetyl-alpha-D-glucosamine biosynthesis; UDP-N-acetyl-alpha-D-glucosamine from N-acetyl-alpha-D-glucosamine 1-phosphate: step 1/1. The protein operates within bacterial outer membrane biogenesis; LPS lipid A biosynthesis. Catalyzes the last two sequential reactions in the de novo biosynthetic pathway for UDP-N-acetylglucosamine (UDP-GlcNAc). The C-terminal domain catalyzes the transfer of acetyl group from acetyl coenzyme A to glucosamine-1-phosphate (GlcN-1-P) to produce N-acetylglucosamine-1-phosphate (GlcNAc-1-P), which is converted into UDP-GlcNAc by the transfer of uridine 5-monophosphate (from uridine 5-triphosphate), a reaction catalyzed by the N-terminal domain. The polypeptide is Bifunctional protein GlmU (Prochlorococcus marinus (strain AS9601)).